Consider the following 216-residue polypeptide: ATP-dependent Clp protease proteolytic subunit (216 aa).

S101 acts as the Nucleophile in catalysis. Residue H126 is part of the active site.

Belongs to the peptidase S14 family. Component of the chloroplastic Clp protease core complex.

The protein localises to the plastid. The protein resides in the chloroplast stroma. It catalyses the reaction Hydrolysis of proteins to small peptides in the presence of ATP and magnesium. alpha-casein is the usual test substrate. In the absence of ATP, only oligopeptides shorter than five residues are hydrolyzed (such as succinyl-Leu-Tyr-|-NHMec, and Leu-Tyr-Leu-|-Tyr-Trp, in which cleavage of the -Tyr-|-Leu- and -Tyr-|-Trp bonds also occurs).. In terms of biological role, cleaves peptides in various proteins in a process that requires ATP hydrolysis. Has a chymotrypsin-like activity. Plays a major role in the degradation of misfolded proteins. This Zea mays (Maize) protein is ATP-dependent Clp protease proteolytic subunit.